A 365-amino-acid chain; its full sequence is Tetraacyldisaccharide 4'-kinase (365 aa).

Position 68-75 (68-75) interacts with ATP; sequence VVGGAGKT.

It belongs to the LpxK family.

It carries out the reaction a lipid A disaccharide + ATP = a lipid IVA + ADP + H(+). The protein operates within glycolipid biosynthesis; lipid IV(A) biosynthesis; lipid IV(A) from (3R)-3-hydroxytetradecanoyl-[acyl-carrier-protein] and UDP-N-acetyl-alpha-D-glucosamine: step 6/6. Transfers the gamma-phosphate of ATP to the 4'-position of a tetraacyldisaccharide 1-phosphate intermediate (termed DS-1-P) to form tetraacyldisaccharide 1,4'-bis-phosphate (lipid IVA). This Chlamydia pneumoniae (Chlamydophila pneumoniae) protein is Tetraacyldisaccharide 4'-kinase.